Reading from the N-terminus, the 299-residue chain is MSTLELCEKYFGTRDVYKLMELARGAGEKEVKKAYHKLSLLVHPDRVPEEQKAESTEKFKVLSKLYQVLTDTQKRALYDEQGVIDDDDESESKLSSWLELWSKIFKPITEEDINNYEKEYVESELERTDLKKAYLGGKGCINYLMNHVPFMKVEDEPRIQKIVQDMIASGEVPEYKIFTEEPAAKRKKRHQKYAREFKEAKVIKERLKRRQKEKDDQDLADNGGDLQQMILARRNQRESNFGSLMDRLMEKYGNEDDSDTVDFSAFEKKKKKSKKPAAKQETKPKLNGVKAGRVEKGKN.

In terms of domain architecture, J spans 15–82 (DVYKLMELAR…QKRALYDEQG (68 aa)). Serine 239 carries the phosphoserine modification. Residues 266 to 299 (FEKKKKKSKKPAAKQETKPKLNGVKAGRVEKGKN) form a disordered region. Basic residues predominate over residues 268-277 (KKKKKSKKPA).

The chain is J domain-containing protein CG6693 from Drosophila melanogaster (Fruit fly).